The primary structure comprises 232 residues: Cytidylate kinase (232 aa).

An ATP-binding site is contributed by 11 to 19; it reads GPAGAGKST.

It belongs to the cytidylate kinase family. Type 1 subfamily.

It localises to the cytoplasm. The catalysed reaction is CMP + ATP = CDP + ADP. It carries out the reaction dCMP + ATP = dCDP + ADP. This Desulfitobacterium hafniense (strain Y51) protein is Cytidylate kinase.